Reading from the N-terminus, the 264-residue chain is Tryptophan synthase alpha chain (264 aa).

Residues E45 and D56 each act as proton acceptor in the active site.

This sequence belongs to the TrpA family. As to quaternary structure, tetramer of two alpha and two beta chains.

The enzyme catalyses (1S,2R)-1-C-(indol-3-yl)glycerol 3-phosphate + L-serine = D-glyceraldehyde 3-phosphate + L-tryptophan + H2O. It functions in the pathway amino-acid biosynthesis; L-tryptophan biosynthesis; L-tryptophan from chorismate: step 5/5. In terms of biological role, the alpha subunit is responsible for the aldol cleavage of indoleglycerol phosphate to indole and glyceraldehyde 3-phosphate. This is Tryptophan synthase alpha chain from Leptospira borgpetersenii serovar Hardjo-bovis (strain JB197).